Consider the following 123-residue polypeptide: Large ribosomal subunit protein uL14 (123 aa).

This sequence belongs to the universal ribosomal protein uL14 family. As to quaternary structure, part of the 50S ribosomal subunit. Forms a cluster with proteins L3 and L19. In the 70S ribosome, L14 and L19 interact and together make contacts with the 16S rRNA in bridges B5 and B8.

Functionally, binds to 23S rRNA. Forms part of two intersubunit bridges in the 70S ribosome. The protein is Large ribosomal subunit protein uL14 of Aliivibrio salmonicida (strain LFI1238) (Vibrio salmonicida (strain LFI1238)).